Here is a 115-residue protein sequence, read N- to C-terminus: Probable non-functional T cell receptor beta variable 23-1 (115 aa).

The first 21 residues, Met-1–Ala-21, serve as a signal peptide directing secretion. The Ig-like domain maps to Lys-22–Gln-115. Cys-42 and Cys-111 are disulfide-bonded.

As to quaternary structure, alpha-beta TR is a heterodimer composed of an alpha and beta chain; disulfide-linked. The alpha-beta TR is associated with the transmembrane signaling CD3 coreceptor proteins to form the TR-CD3 (TcR or TCR). The assembly of alpha-beta TR heterodimers with CD3 occurs in the endoplasmic reticulum where a single alpha-beta TR heterodimer associates with one CD3D-CD3E heterodimer, one CD3G-CD3E heterodimer and one CD247 homodimer forming a stable octameric structure. CD3D-CD3E and CD3G-CD3E heterodimers preferentially associate with TR alpha and TR beta chains, respectively. The association of the CD247 homodimer is the last step of TcR assembly in the endoplasmic reticulum and is required for transport to the cell surface.

It localises to the cell membrane. Its function is as follows. Probable non-functional open reading frame (ORF) of V region of the variable domain of T cell receptor (TR) beta chain. Non-functional ORF generally cannot participate in the synthesis of a productive T cell receptor (TR) chain due to altered V-(D)-J or switch recombination and/or splicing site (at mRNA level) and/or conserved amino acid change (protein level). Alpha-beta T cell receptors are antigen specific receptors which are essential to the immune response and are present on the cell surface of T lymphocytes. Recognize peptide-major histocompatibility (MH) (pMH) complexes that are displayed by antigen presenting cells (APC), a prerequisite for efficient T cell adaptive immunity against pathogens. Binding of alpha-beta TR to pMH complex initiates TR-CD3 clustering on the cell surface and intracellular activation of LCK that phosphorylates the ITAM motifs of CD3G, CD3D, CD3E and CD247 enabling the recruitment of ZAP70. In turn ZAP70 phosphorylates LAT, which recruits numerous signaling molecules to form the LAT signalosome. The LAT signalosome propagates signal branching to three major signaling pathways, the calcium, the mitogen-activated protein kinase (MAPK) kinase and the nuclear factor NF-kappa-B (NF-kB) pathways, leading to the mobilization of transcription factors that are critical for gene expression and essential for T cell growth and differentiation. The T cell repertoire is generated in the thymus, by V-(D)-J rearrangement. This repertoire is then shaped by intrathymic selection events to generate a peripheral T cell pool of self-MH restricted, non-autoaggressive T cells. Post-thymic interaction of alpha-beta TR with the pMH complexes shapes TR structural and functional avidity. The sequence is that of Probable non-functional T cell receptor beta variable 23-1 from Homo sapiens (Human).